Here is a 125-residue protein sequence, read N- to C-terminus: Small ribosomal subunit protein uS13 (125 aa).

The tract at residues 99-125 (RGQRTKTNARTRKGKRKTVANKKMAAK) is disordered.

This sequence belongs to the universal ribosomal protein uS13 family. Part of the 30S ribosomal subunit. Forms a loose heterodimer with protein S19. Forms two bridges to the 50S subunit in the 70S ribosome.

Its function is as follows. Located at the top of the head of the 30S subunit, it contacts several helices of the 16S rRNA. In the 70S ribosome it contacts the 23S rRNA (bridge B1a) and protein L5 of the 50S subunit (bridge B1b), connecting the 2 subunits; these bridges are implicated in subunit movement. Contacts the tRNAs in the A and P-sites. This chain is Small ribosomal subunit protein uS13, found in Borrelia turicatae (strain 91E135).